Consider the following 466-residue polypeptide: UDP-N-acetylmuramoylalanine--D-glutamate ligase (466 aa).

121 to 127 (GTNGKST) serves as a coordination point for ATP.

It belongs to the MurCDEF family.

It is found in the cytoplasm. The catalysed reaction is UDP-N-acetyl-alpha-D-muramoyl-L-alanine + D-glutamate + ATP = UDP-N-acetyl-alpha-D-muramoyl-L-alanyl-D-glutamate + ADP + phosphate + H(+). The protein operates within cell wall biogenesis; peptidoglycan biosynthesis. Its function is as follows. Cell wall formation. Catalyzes the addition of glutamate to the nucleotide precursor UDP-N-acetylmuramoyl-L-alanine (UMA). The polypeptide is UDP-N-acetylmuramoylalanine--D-glutamate ligase (Bradyrhizobium diazoefficiens (strain JCM 10833 / BCRC 13528 / IAM 13628 / NBRC 14792 / USDA 110)).